The primary structure comprises 497 residues: Lysophospholipid acyltransferase 5 (497 aa).

6 helical membrane passes run 31–51, 74–94, 100–120, 173–193, 213–235, and 264–286; these read LLTI…ISVI, GLDT…VLLL, IFLA…YFYT, LELL…QFPF, AGVR…LRYL, and SLYK…GLTY. Catalysis depends on residues N322 and H358. A helical transmembrane segment spans residues 339–361; it reads FLNNRTISYGAALGFLAVWHGYH. An N-linked (GlcNAc...) asparagine glycan is attached at N398. The next 2 membrane-spanning stretches (helical) occupy residues 408 to 428 and 435 to 455; these read FITL…AFVF and IVVY…WAAF. The tract at residues 469–497 is disordered; that stretch reads KLAGEDQKLQDSNTDKLVEEKKPEDKKSE. The segment covering 470-497 has biased composition (basic and acidic residues); that stretch reads LAGEDQKLQDSNTDKLVEEKKPEDKKSE. S480 is subject to Phosphoserine.

This sequence belongs to the membrane-bound acyltransferase family. During gastrulation, expressed mainly along the midline in the presumptive mesoderm. During germ band elongation, expressed in mesoderm and endoderm primordia and in the cephalic furrow. Expression in mesoderm and endoderm lineages continues during germ band shortening. At the end of this process, no longer detected in somatic mesoderm or endoderm layer with expression restricted to anterior and posterior domains of the visceral mesoderm.

The protein localises to the endoplasmic reticulum. The protein resides in the membrane. It carries out the reaction a 1-acyl-sn-glycero-3-phospho-L-serine + an acyl-CoA = a 1,2-diacyl-sn-glycero-3-phospho-L-serine + CoA. The catalysed reaction is 1-(9Z-octadecenoyl)-sn-glycero-3-phospho-L-serine + (9Z)-hexadecenoyl-CoA = 1-(9Z-octadecenoyl)-2-(9Z-hexadecenoyl)-sn-glycero-3-phospho-L-serine + CoA. It catalyses the reaction a 1-acyl-sn-glycero-3-phosphocholine + an acyl-CoA = a 1,2-diacyl-sn-glycero-3-phosphocholine + CoA. The enzyme catalyses 1-hexadecanoyl-sn-glycero-3-phosphocholine + (9Z)-octadecenoyl-CoA = 1-hexadecanoyl-2-(9Z-octadecenoyl)-sn-glycero-3-phosphocholine + CoA. It carries out the reaction (9Z,12Z)-octadecadienoyl-CoA + 1-hexadecanoyl-sn-glycero-3-phosphocholine = 1-hexadecanoyl-2-(9Z,12Z-octadecadienoyl)-sn-glycero-3-phosphocholine + CoA. The catalysed reaction is (5Z,8Z,11Z,14Z)-eicosatetraenoyl-CoA + 1-hexadecanoyl-sn-glycero-3-phosphocholine = 1-hexadecanoyl-2-(5Z,8Z,11Z,14Z-eicosatetraenoyl)-sn-glycero-3-phosphocholine + CoA. It catalyses the reaction (9Z)-hexadecenoyl-CoA + 1-hexadecanoyl-sn-glycero-3-phosphocholine = 1-hexadecanoyl-2-(9Z-hexadecenoyl)-sn-glycero-3-phosphocholine + CoA. The protein operates within lipid metabolism; phospholipid metabolism. Its function is as follows. Acyltransferase that mediates the acylation of lysophospholipids to produce phospholipids (glycerophospholipids). Highest activity with lysophosphatidylcholine (1-acyl-sn-glycero-3-phosphocholine or LPC) producing phosphatidylcholine (1,2-diacyl-sn-glycero-3-phosphocholine or PC) (LPCAT activity), but also converts lysophosphatidylserine (1-acyl-2-hydroxy-sn-glycero-3-phospho-L-serine or LPS) to phosphatidylserine (1,2-diacyl-sn-glycero-3-phospho-L-serine or PS) (LPSAT activity). Has a preference for unsaturated fatty acids of at least 16 carbons such as oleoyl-CoA ((9Z)-octadecenoyl-CoA) and palmitoleoyl-CoA ((9Z)-hexadecenoyl-CoA). Glycerophospholipids are important structural and functional components of cellular membrane, acyl-chain remodeling regulates the molecular species distribution of glycerophospholipids which can affect membrane fluidity and curvature. Essential for fertility and viability together with Oysgedart (Oys). Required for germ cells to migrate into the mesoderm. The chain is Lysophospholipid acyltransferase 5 from Drosophila melanogaster (Fruit fly).